Consider the following 195-residue polypeptide: HTH-type transcriptional regulator BetI (195 aa).

The region spanning 8 to 68 (PIRRQQLIEA…ATMRYLISHL (61 aa)) is the HTH tetR-type domain. Residues 31–50 (SIVQIARRAGVSNGIISHYF) constitute a DNA-binding region (H-T-H motif).

It participates in amine and polyamine biosynthesis; betaine biosynthesis via choline pathway [regulation]. In terms of biological role, repressor involved in the biosynthesis of the osmoprotectant glycine betaine. It represses transcription of the choline transporter BetT and the genes of BetAB involved in the synthesis of glycine betaine. This Pectobacterium atrosepticum (strain SCRI 1043 / ATCC BAA-672) (Erwinia carotovora subsp. atroseptica) protein is HTH-type transcriptional regulator BetI.